Reading from the N-terminus, the 304-residue chain is Acetyl-coenzyme A carboxylase carboxyl transferase subunit beta (304 aa).

A CoA carboxyltransferase N-terminal domain is found at 23–292 (VWTKCDSCGQ…PNPEAPREGV (270 aa)). The Zn(2+) site is built by cysteine 27, cysteine 30, cysteine 46, and cysteine 49. The C4-type zinc-finger motif lies at 27–49 (CDSCGQVLYRAELERNLEVCPKC). The interval 284-304 (NPEAPREGVVVPPVPDQEPEA) is disordered. Residues 295–304 (PPVPDQEPEA) are compositionally biased toward pro residues.

It belongs to the AccD/PCCB family. In terms of assembly, acetyl-CoA carboxylase is a heterohexamer composed of biotin carboxyl carrier protein (AccB), biotin carboxylase (AccC) and two subunits each of ACCase subunit alpha (AccA) and ACCase subunit beta (AccD). The cofactor is Zn(2+).

The protein resides in the cytoplasm. It carries out the reaction N(6)-carboxybiotinyl-L-lysyl-[protein] + acetyl-CoA = N(6)-biotinyl-L-lysyl-[protein] + malonyl-CoA. It participates in lipid metabolism; malonyl-CoA biosynthesis; malonyl-CoA from acetyl-CoA: step 1/1. Its function is as follows. Component of the acetyl coenzyme A carboxylase (ACC) complex. Biotin carboxylase (BC) catalyzes the carboxylation of biotin on its carrier protein (BCCP) and then the CO(2) group is transferred by the transcarboxylase to acetyl-CoA to form malonyl-CoA. The chain is Acetyl-coenzyme A carboxylase carboxyl transferase subunit beta from Shigella boydii serotype 4 (strain Sb227).